Here is a 165-residue protein sequence, read N- to C-terminus: Thiol peroxidase (165 aa).

Residues 18 to 164 form the Thioredoxin domain; it reads RKVGDKAPNF…YEAAIEAAKK (147 aa). The active-site Cysteine sulfenic acid (-SOH) intermediate is the C60. C60 and C94 are oxidised to a cystine.

Belongs to the peroxiredoxin family. Tpx subfamily. As to quaternary structure, homodimer.

The enzyme catalyses a hydroperoxide + [thioredoxin]-dithiol = an alcohol + [thioredoxin]-disulfide + H2O. In terms of biological role, thiol-specific peroxidase that catalyzes the reduction of hydrogen peroxide and organic hydroperoxides to water and alcohols, respectively. Plays a role in cell protection against oxidative stress by detoxifying peroxides. In Listeria monocytogenes serovar 1/2a (strain ATCC BAA-679 / EGD-e), this protein is Thiol peroxidase.